Here is a 53-residue protein sequence, read N- to C-terminus: Light-harvesting protein B-800/820 alpha chain (53 aa).

The Cytoplasmic segment spans residues 1–14; that stretch reads MNQGKIWTVVNPAV. The chain crosses the membrane as a helical span at residues 15-35; the sequence is GLPLLLGSVAITALLVHLAVL. Histidine 31 contributes to the a bacteriochlorophyll binding site. Residues 36-53 are Periplasmic-facing; the sequence is THTTWFPAFTQGGLKKAA.

The protein belongs to the antenna complex alpha subunit family. The core complex is formed by different alpha and beta chains, binding bacteriochlorophyll molecules, and arranged most probably in tetrameric structures disposed around the reaction center. The non-pigmented gamma chains may constitute additional components.

Its subcellular location is the cell inner membrane. Functionally, antenna complexes are light-harvesting systems, which transfer the excitation energy to the reaction centers. The protein is Light-harvesting protein B-800/820 alpha chain of Rhodoblastus acidophilus (Rhodopseudomonas acidophila).